The following is a 284-amino-acid chain: Halorhodopsin (284 aa).

Residues Met-1–Ser-30 are Extracellular-facing. The chain crosses the membrane as a helical span at residues Asp-31–Gly-56. The Cytoplasmic portion of the chain corresponds to Arg-57 to Pro-62. A helical membrane pass occupies residues Arg-63–Val-86. Over Ser-87–Pro-110 the chain is Extracellular. A helical transmembrane segment spans residues Trp-111–Ala-132. Over Gly-133–Asn-135 the chain is Cytoplasmic. Residues Thr-136–Thr-159 form a helical membrane-spanning segment. Residues Thr-160 to Ser-162 are Extracellular-facing. Residues Tyr-163–Leu-185 form a helical membrane-spanning segment. Over Ala-186–Thr-197 the chain is Cytoplasmic. A helical transmembrane segment spans residues Ala-198 to Leu-221. The Extracellular portion of the chain corresponds to Gly-222–Asp-230. The helical transmembrane segment at Val-231 to Asn-259 threads the bilayer. The residue at position 246 (Lys-246) is an N6-(retinylidene)lysine. Residues Asn-260–Asp-284 lie on the Cytoplasmic side of the membrane.

The protein belongs to the archaeal/bacterial/fungal opsin family.

The protein localises to the cell membrane. Light-driven chloride pump. The protein is Halorhodopsin (hop) of Halobacterium sp. (strain SG1).